The chain runs to 218 residues: Ribose-5-phosphate isomerase A (218 aa).

Substrate contacts are provided by residues 27–30, 80–83, and 93–96; these read TGST, DGAD, and KGGG. E102 serves as the catalytic Proton acceptor. Residue K120 coordinates substrate.

It belongs to the ribose 5-phosphate isomerase family. Homodimer.

The catalysed reaction is aldehydo-D-ribose 5-phosphate = D-ribulose 5-phosphate. It participates in carbohydrate degradation; pentose phosphate pathway; D-ribose 5-phosphate from D-ribulose 5-phosphate (non-oxidative stage): step 1/1. Functionally, catalyzes the reversible conversion of ribose-5-phosphate to ribulose 5-phosphate. The chain is Ribose-5-phosphate isomerase A from Thiobacillus denitrificans (strain ATCC 25259 / T1).